Here is a 233-residue protein sequence, read N- to C-terminus: Small ribosomal subunit protein uS3 (233 aa).

The KH type-2 domain maps to 39–107 (VRQYLKKELA…PAQINISEVR (69 aa)).

The protein belongs to the universal ribosomal protein uS3 family. As to quaternary structure, part of the 30S ribosomal subunit. Forms a tight complex with proteins S10 and S14.

Functionally, binds the lower part of the 30S subunit head. Binds mRNA in the 70S ribosome, positioning it for translation. This is Small ribosomal subunit protein uS3 from Photorhabdus laumondii subsp. laumondii (strain DSM 15139 / CIP 105565 / TT01) (Photorhabdus luminescens subsp. laumondii).